The sequence spans 360 residues: Alpha-methylacyl-CoA racemase (360 aa).

Substrate contacts are provided by residues Arg38, 59–62 (ADLK), 83–85 (GYR), Arg91, and 125–130 (GHDINY). The Proton acceptor role is filled by His126. The active-site Proton donor is the Asp156.

Belongs to the CoA-transferase III family. Homodimer.

The enzyme catalyses a (2S)-2-methylacyl-CoA = a (2R)-2-methylacyl-CoA. The catalysed reaction is (2S)-2-methyltetradecanoyl-CoA = (2R)-2-methyltetradecanoyl-CoA. It carries out the reaction (2R)-pristanoyl-CoA = (2S)-pristanoyl-CoA. It catalyses the reaction (25S)-3-oxocholest-4-en-26-oyl-CoA = (25R)-3-oxocholest-4-en-26-oyl-CoA. The enzyme catalyses (2S)-ibuprofenoyl-CoA = (2R)-ibuprofenoyl-CoA. With respect to regulation, inactivated by N,N-dialkylcarbamoyl-CoA substrate-product analogs. In terms of biological role, catalyzes the epimerization of (2R)- and (2S)-methylacyl-coenzyme A (CoA) thioesters. Accepts as substrates a wide range of alpha-methylacyl-CoAs, including (2R)-2-methylmyristoyl-CoA and (2S)-2-methylmyristoyl-CoA, (2R)-pristanoyl-CoA and (2S)-pristanoyl-CoA, and the cholesterol esters (25R)-3-oxo-cholest-4-en-26-oyl-CoA and (25S)-3-oxo-cholest-4-en-26-oyl-CoA. Can also catalyze the interconversion of the non-physiologic substrates (2R)-ibuprofenoyl-CoA and (2S)-ibuprofenoyl-CoA, which are potential competitive inhibitors of the enzyme. The sequence is that of Alpha-methylacyl-CoA racemase from Mycobacterium tuberculosis (strain ATCC 25618 / H37Rv).